The primary structure comprises 305 residues: UDP-3-O-acyl-N-acetylglucosamine deacetylase (305 aa).

Zn(2+)-binding residues include His-78, His-235, and Asp-239. His-262 functions as the Proton donor in the catalytic mechanism.

It belongs to the LpxC family. The cofactor is Zn(2+).

It carries out the reaction a UDP-3-O-[(3R)-3-hydroxyacyl]-N-acetyl-alpha-D-glucosamine + H2O = a UDP-3-O-[(3R)-3-hydroxyacyl]-alpha-D-glucosamine + acetate. It functions in the pathway glycolipid biosynthesis; lipid IV(A) biosynthesis; lipid IV(A) from (3R)-3-hydroxytetradecanoyl-[acyl-carrier-protein] and UDP-N-acetyl-alpha-D-glucosamine: step 2/6. Catalyzes the hydrolysis of UDP-3-O-myristoyl-N-acetylglucosamine to form UDP-3-O-myristoylglucosamine and acetate, the committed step in lipid A biosynthesis. This chain is UDP-3-O-acyl-N-acetylglucosamine deacetylase, found in Geobacter sp. (strain M21).